The chain runs to 1405 residues: DNA-directed RNA polymerase subunit beta' (1405 aa).

The Zn(2+) site is built by Cys70, Cys72, Cys85, and Cys88. Mg(2+) is bound by residues Asp460, Asp462, and Asp464. 4 residues coordinate Zn(2+): Cys814, Cys888, Cys895, and Cys898.

The protein belongs to the RNA polymerase beta' chain family. In terms of assembly, the RNAP catalytic core consists of 2 alpha, 1 beta, 1 beta' and 1 omega subunit. When a sigma factor is associated with the core the holoenzyme is formed, which can initiate transcription. Mg(2+) is required as a cofactor. It depends on Zn(2+) as a cofactor.

The enzyme catalyses RNA(n) + a ribonucleoside 5'-triphosphate = RNA(n+1) + diphosphate. Its function is as follows. DNA-dependent RNA polymerase catalyzes the transcription of DNA into RNA using the four ribonucleoside triphosphates as substrates. The polypeptide is DNA-directed RNA polymerase subunit beta' (Shewanella sp. (strain MR-7)).